The sequence spans 352 residues: Phosphoribosylformylglycinamidine cyclo-ligase (352 aa).

It belongs to the AIR synthase family.

The protein resides in the cytoplasm. The enzyme catalyses 2-formamido-N(1)-(5-O-phospho-beta-D-ribosyl)acetamidine + ATP = 5-amino-1-(5-phospho-beta-D-ribosyl)imidazole + ADP + phosphate + H(+). The protein operates within purine metabolism; IMP biosynthesis via de novo pathway; 5-amino-1-(5-phospho-D-ribosyl)imidazole from N(2)-formyl-N(1)-(5-phospho-D-ribosyl)glycinamide: step 2/2. The protein is Phosphoribosylformylglycinamidine cyclo-ligase of Nitrosospira multiformis (strain ATCC 25196 / NCIMB 11849 / C 71).